A 948-amino-acid chain; its full sequence is MAQQYQPGQRWISDSEAELGLGTVLAQDGRLLTVLYPATGETRQYALRNAPLTRVRFSPGDVITHFENWKMTVREVDDVDGLLVYHGLNAQNELVTLPETQLSNFIQFRLATDRLFAGQIDQLSWFSLRYNTLEHTSRQLQSSLWGLGGVRAQPIAHQLHIAREVADRIAPRVLLADEVGLGKTIEAGLVIHRQLLSGRASRVLILVPENLQHQWLVEMRRRFNLQVALFDAERFMESDAGNPFEDTQLALVALEWLVEDEKAQDALFAAGWDLMVVDEAHHLVWHEDKASREYSLVEQLAEVIAGVLLLTATPEQLGQDSHFARLRLLDPNRFHDLKAFRAESENYRPVAQAVQELLDKGKLSAAAQETIHGFLGAEGDSLLAAVNTGDEEAKSRLIRELLDRHGTGRVLFRNTRAAVQGFPERKLHQYPLPCPVEYLELPVGEHADLYPEVSFQSHSDVSEEERWWRFDPRVDWLIDTLKMLKRVKVLVICAHAETAMDLEDALRVRSGIPATVFHEGMNILERDRAAAYFADEEFGAQVLICSEIGSEGRNFQFSHHLVLFDLPSHPDLLEQRIGRLDRIGQKHTIELHVPFLETSPQARLFQWYHEALNAFLNTCPTGNALQHQFGPRLLPLLESGDDDKWQTLINEARSERERLESELHTGRDRLLELNSGGAGEGEALVEAILDQDDQFSLPIYMETLFDAFGIDSEDHSENALILKPSEKMLDASFPLGDDEGVTITYDRNQALSREDMQFITWEHPMVQGGMDLVLSGSMGNTAVALIKNKALKPGTVLLELIYVSEVVAPRSLQLGRYLPPAALRCLLDPNGNDLASRVSFNTLNDQLESVPRASANKFIQAQRDQLTPRINAGEEKIMPKHAERVAEAQRRLAADTEEELARLTALQAVNPTVRDSELVALRTQREQGLAMLEKAALRLEAIRVLVAG.

A Helicase ATP-binding domain is found at 164 to 332; it reads EVADRIAPRV…FARLRLLDPN (169 aa). 177–184 contacts ATP; it reads DEVGLGKT. The DEAH box signature appears at 278–281; the sequence is DEAH. A Helicase C-terminal domain is found at 473 to 627; it reads RVDWLIDTLK…TCPTGNALQH (155 aa).

The protein belongs to the SNF2/RAD54 helicase family. RapA subfamily. Interacts with the RNAP. Has a higher affinity for the core RNAP than for the holoenzyme. Its ATPase activity is stimulated by binding to RNAP.

Its function is as follows. Transcription regulator that activates transcription by stimulating RNA polymerase (RNAP) recycling in case of stress conditions such as supercoiled DNA or high salt concentrations. Probably acts by releasing the RNAP, when it is trapped or immobilized on tightly supercoiled DNA. Does not activate transcription on linear DNA. Probably not involved in DNA repair. The protein is RNA polymerase-associated protein RapA of Pseudomonas syringae pv. syringae (strain B728a).